The sequence spans 309 residues: Aspartate carbamoyltransferase catalytic subunit (309 aa).

Residues Arg-55 and Thr-56 each coordinate carbamoyl phosphate. Residue Lys-85 participates in L-aspartate binding. 3 residues coordinate carbamoyl phosphate: Arg-106, His-135, and Gln-138. L-aspartate contacts are provided by Arg-168 and Arg-230. Carbamoyl phosphate is bound by residues Leu-268 and Pro-269.

It belongs to the aspartate/ornithine carbamoyltransferase superfamily. ATCase family. As to quaternary structure, heterododecamer (2C3:3R2) of six catalytic PyrB chains organized as two trimers (C3), and six regulatory PyrI chains organized as three dimers (R2).

It carries out the reaction carbamoyl phosphate + L-aspartate = N-carbamoyl-L-aspartate + phosphate + H(+). It participates in pyrimidine metabolism; UMP biosynthesis via de novo pathway; (S)-dihydroorotate from bicarbonate: step 2/3. In terms of biological role, catalyzes the condensation of carbamoyl phosphate and aspartate to form carbamoyl aspartate and inorganic phosphate, the committed step in the de novo pyrimidine nucleotide biosynthesis pathway. The chain is Aspartate carbamoyltransferase catalytic subunit from Aliivibrio salmonicida (strain LFI1238) (Vibrio salmonicida (strain LFI1238)).